We begin with the raw amino-acid sequence, 217 residues long: Phosphatidylinositol phosphate synthase (217 aa).

The next 2 membrane-spanning stretches (helical) occupy residues 28–49 (LTPD…LTLF) and 55–74 (FAGA…DGAM). Position 31-34 (31-34 (DVVT)) interacts with a CDP-1,2-diacyl-sn-glycerol. Residues Asp68 and Asp71 each coordinate Mg(2+). A CDP-1,2-diacyl-sn-glycerol is bound by residues Gly72, Arg76, and Thr82. Mg(2+)-binding residues include Asp89 and Asp93. Asp93 serves as the catalytic Proton acceptor. 4 consecutive transmembrane segments (helical) span residues 95–112 (ISDG…AFHM), 118–136 (VIAT…YIKA), 156–173 (LIIV…FVPW), and 179–200 (VGMW…HTVW).

The protein belongs to the CDP-alcohol phosphatidyltransferase class-I family. Homodimer. Mg(2+) is required as a cofactor.

The protein resides in the cell membrane. It carries out the reaction a CDP-1,2-diacyl-sn-glycerol + 1D-myo-inositol 3-phosphate = a 1,2-diacyl-sn-glycero-3-phospho-(1D-myo-inositol-3-phosphate) + CMP + H(+). The enzyme catalyses 1,2-di-(9Z-octadecenoyl)-sn-glycero-3-cytidine-5'-diphosphate + 1D-myo-inositol 3-phosphate = 1,2-di-(9Z-octadecenoyl)-sn-glycero-3-phospho-(1D-myo-inositol-3-phosphate) + CMP + H(+). It functions in the pathway phospholipid metabolism; phosphatidylinositol phosphate biosynthesis. Competitively inhibited by several inositol 1-phosphate analogs, including the phosphonate analog 1-deoxy-1-phosphonomethyl-myo-inositol (Ino-C-P). Functionally, catalyzes the conjugation of the 1'-hydroxyl group of D-myo-inositol-3-phosphate (also named L-myo-inositol-1-phosphate) with a lipid tail of cytidine diphosphate diacylglycerol (CDP-DAG), forming phosphatidylinositol phosphate (PIP) and CMP. PIP is a precursor of phosphatidylinositol (PI) which is an essential lipid for mycobacteria required for formation of their cell wall. The polypeptide is Phosphatidylinositol phosphate synthase (Mycobacterium bovis (strain BCG / Pasteur 1173P2)).